The sequence spans 58 residues: Large ribosomal subunit protein bL32c (58 aa).

Disordered regions lie at residues 1–21 (MAVPKKRTPKSKTRSRKSQWM) and 34–58 (LAGRLAARQDQMQPTQMQPTQMQPN). Positions 44–58 (QMQPTQMQPTQMQPN) are enriched in low complexity.

The protein belongs to the bacterial ribosomal protein bL32 family.

It localises to the plastid. Its subcellular location is the chloroplast. The chain is Large ribosomal subunit protein bL32c from Cyanidioschyzon merolae (strain NIES-3377 / 10D) (Unicellular red alga).